The sequence spans 1597 residues: Protein STU1 (1597 aa).

4 disordered regions span residues 220-265, 519-958, 1005-1154, and 1307-1332; these read GNSS…PSSS, DKVN…RPIH, DAEA…ELNT, and SQRPPDKRTSRAFLEAPSPSPDSSLV. Over residues 535–552 the composition is skewed to basic and acidic residues; sequence APRESLKEVMRRSRESSV. The segment covering 577-605 has biased composition (low complexity); it reads SSGLVGRSLSGSNLTDRSNRLSSTSTSSR. Composition is skewed to polar residues over residues 610-622 and 632-645; these read AVSDSTRPTQMTR and PSLTRSSRDQSLTR. Composition is skewed to basic and acidic residues over residues 660–673 and 694–708; these read GSRELPKQRVDQNR and ESSRQSRESSLDPSR. The segment covering 709–726 has biased composition (polar residues); it reads ESSLAPSVHSSTAISRES. Positions 765–781 are enriched in low complexity; it reads EETMNEVTTAEATATTA. Polar residues-rich tracts occupy residues 791–801 and 808–822; these read PRESTPPNSSP and PATQGVSTSPATGKS. Positions 832–846 are enriched in basic and acidic residues; that stretch reads ELSRDLNGESKHLKE. Composition is skewed to polar residues over residues 918 to 933, 1013 to 1025, and 1036 to 1045; these read DSQSHGADSADLQSEP, TEQTEAVKTSDTA, and NSEQGPSTEP. Residues 1081 to 1091 show a composition bias toward basic and acidic residues; sequence ASDEIETDHTK. The segment covering 1108–1119 has biased composition (acidic residues); sequence EPMEICDSDNDA. Positions 1122–1139 are enriched in polar residues; sequence NGTNPDTKCQDQQDSTTP. Residues 1537-1573 form an HEAT repeat; that stretch reads PSYETQLLALITELISDPDPLVRRVTVGLVVRVLRVS.

This sequence belongs to the CLASP family. As to quaternary structure, interacts with microtubules.

The protein resides in the cytoplasm. It localises to the cytoskeleton. The protein localises to the nucleus. Its subcellular location is the spindle. Microtubule binding protein that promotes the stabilization of dynamic microtubules. Required for mitotic spindle formation. The protein is Protein STU1 (STU1) of Yarrowia lipolytica (strain CLIB 122 / E 150) (Yeast).